An 842-amino-acid chain; its full sequence is Glycogen phosphorylase, muscle form (842 aa).

N-acetylserine is present on Ser-2. Residue Ser-15 is modified to Phosphoserine; by PHK; in form phosphorylase A. Residues Asp-43 and Tyr-76 each contribute to the AMP site. Residues Tyr-204 and Tyr-227 each carry the phosphotyrosine modification. Position 310–319 (310–319 (RRFKSSKFGC)) interacts with AMP. Phosphoserine is present on Ser-430. Tyr-473 is modified (phosphotyrosine). An N6-(pyridoxal phosphate)lysine modification is found at Lys-681. Residues Ser-747 and Ser-748 each carry the phosphoserine modification.

Belongs to the glycogen phosphorylase family. As to quaternary structure, homodimer. Homotetramer; to form the enzymatically active phosphorylase A. The cofactor is pyridoxal 5'-phosphate. Phosphorylation of Ser-15 converts phosphorylase B (unphosphorylated) to phosphorylase A.

The enzyme catalyses [(1-&gt;4)-alpha-D-glucosyl](n) + phosphate = [(1-&gt;4)-alpha-D-glucosyl](n-1) + alpha-D-glucose 1-phosphate. Allosterically regulated through the non-covalent binding of metabolites, being activated by AMP and inhibited by ATP, ADP, and glucose-6-phosphate. The activity is also controlled by post-translational modifications including phosphorylation. Its function is as follows. Allosteric enzyme that catalyzes the rate-limiting step in glycogen catabolism, the phosphorolytic cleavage of glycogen to produce glucose-1-phosphate, and plays a central role in maintaining cellular and organismal glucose homeostasis. The protein is Glycogen phosphorylase, muscle form of Ovis aries (Sheep).